The following is a 428-amino-acid chain: Cysteine synthase 2 (428 aa).

Residues isoleucine 7 to phenylalanine 27 traverse the membrane as a helical segment. Lysine 106 carries the post-translational modification N6-(pyridoxal phosphate)lysine. Residues glycine 260–threonine 264 and serine 367 contribute to the pyridoxal 5'-phosphate site.

Belongs to the cysteine synthase/cystathionine beta-synthase family. Pyridoxal 5'-phosphate serves as cofactor.

The protein localises to the mitochondrion outer membrane. It catalyses the reaction O-acetyl-L-serine + hydrogen sulfide = L-cysteine + acetate. Putative cysteine synthase that catalyzes the conversion of O-acetyl-L-serine (OAS) into cysteine, the last step in the cysteine biosynthesis pathway. However, in contrast to cysteine synthase cysB, this CS-like protein seems not to function in cysteine biosynthesis. The polypeptide is Cysteine synthase 2 (Emericella nidulans (strain FGSC A4 / ATCC 38163 / CBS 112.46 / NRRL 194 / M139) (Aspergillus nidulans)).